A 94-amino-acid polypeptide reads, in one-letter code: Co-chaperonin GroES (94 aa).

This sequence belongs to the GroES chaperonin family. In terms of assembly, heptamer of 7 subunits arranged in a ring. Interacts with the chaperonin GroEL.

It localises to the cytoplasm. Functionally, together with the chaperonin GroEL, plays an essential role in assisting protein folding. The GroEL-GroES system forms a nano-cage that allows encapsulation of the non-native substrate proteins and provides a physical environment optimized to promote and accelerate protein folding. GroES binds to the apical surface of the GroEL ring, thereby capping the opening of the GroEL channel. This chain is Co-chaperonin GroES, found in Geobacillus sp. (strain WCH70).